Here is a 421-residue protein sequence, read N- to C-terminus: Ribulose bisphosphate carboxylase large chain (421 aa).

Substrate contacts are provided by asparagine 68 and threonine 118. The active-site Proton acceptor is the lysine 120. Lysine 122 is a binding site for substrate. 3 residues coordinate Mg(2+): lysine 146, aspartate 148, and glutamate 149. Residue lysine 146 is modified to N6-carboxylysine. The active-site Proton acceptor is histidine 239. Substrate contacts are provided by arginine 240, histidine 272, and serine 324.

Belongs to the RuBisCO large chain family. Type I subfamily. Heterohexadecamer of 8 large chains and 8 small chains; disulfide-linked. The disulfide link is formed within the large subunit homodimers. Mg(2+) is required as a cofactor. The disulfide bond which can form in the large chain dimeric partners within the hexadecamer appears to be associated with oxidative stress and protein turnover.

The protein resides in the plastid. Its subcellular location is the chloroplast. The catalysed reaction is 2 (2R)-3-phosphoglycerate + 2 H(+) = D-ribulose 1,5-bisphosphate + CO2 + H2O. The enzyme catalyses D-ribulose 1,5-bisphosphate + O2 = 2-phosphoglycolate + (2R)-3-phosphoglycerate + 2 H(+). Functionally, ruBisCO catalyzes two reactions: the carboxylation of D-ribulose 1,5-bisphosphate, the primary event in carbon dioxide fixation, as well as the oxidative fragmentation of the pentose substrate in the photorespiration process. Both reactions occur simultaneously and in competition at the same active site. This is Ribulose bisphosphate carboxylase large chain (rbcL) from Aegilops tauschii (Tausch's goatgrass).